The following is a 281-amino-acid chain: Arabinose operon regulatory protein (281 aa).

The alpha-L-arabinopyanose site is built by Pro8, Thr24, Arg38, Tyr82, and His93. Residues 180 to 279 (RDACQYISDH…GASPSEFRAG (100 aa)) enclose the HTH araC/xylS-type domain. 2 consecutive DNA-binding regions (H-T-H motif) follow at residues 198–219 (ASVAQHVCLSPSRLSHLFRQQL) and 246–269 (IATVGRNVGFDDQLYFSRVFKKCT).

As to quaternary structure, homodimer.

The protein localises to the cytoplasm. Its function is as follows. Transcription factor that regulates the expression of several genes involved in the transport and metabolism of L-arabinose. In Salmonella typhimurium (strain LT2 / SGSC1412 / ATCC 700720), this protein is Arabinose operon regulatory protein.